The chain runs to 269 residues: Expansin-B1 (269 aa).

The signal sequence occupies residues 1 to 24; that stretch reads MGSLANNIMVVGAVLAALVAGGSC. Asn34 carries an N-linked (GlcNAc...) asparagine glycan. The Expansin-like EG45 domain occupies 63–169; the sequence is GGACGIKNVN…RRVRCKYPAG (107 aa). Cystine bridges form between Cys66–Cys94, Cys97–Cys164, and Cys102–Cys108. In terms of domain architecture, Expansin-like CBD spans 183–264; the sequence is NYLAVLVKYV…NWRPDAVYTS (82 aa).

Belongs to the expansin family. Expansin B subfamily. In terms of tissue distribution, expressed in anthers and pollen.

The protein localises to the secreted. Its subcellular location is the cell wall. It localises to the membrane. Its function is as follows. May aid fertilization by loosening the cell wall of the stigma and style, thereby facilitating penetration of the pollen tube. Acts selectively on grass cell walls, which are relatively poor in pectins and xyloglucans and rich in glucuronoarabinoxylans and (1-3),(1-4)-beta-D-glucans, when compared with cell walls of other angiosperms, including other monocots. The protein is Expansin-B1 (EXPB1) of Zea mays (Maize).